The primary structure comprises 539 residues: Chaperonin GroEL 2 (539 aa).

Residues 30–33, lysine 51, 87–91, glycine 415, 480–482, and aspartate 496 contribute to the ATP site; these read TLGP, DGTTT, and NAA.

It belongs to the chaperonin (HSP60) family. In terms of assembly, forms a cylinder of 14 subunits composed of two heptameric rings stacked back-to-back. Interacts with the co-chaperonin GroES.

Its subcellular location is the cytoplasm. The catalysed reaction is ATP + H2O + a folded polypeptide = ADP + phosphate + an unfolded polypeptide.. Together with its co-chaperonin GroES, plays an essential role in assisting protein folding. The GroEL-GroES system forms a nano-cage that allows encapsulation of the non-native substrate proteins and provides a physical environment optimized to promote and accelerate protein folding. The protein is Chaperonin GroEL 2 of Sphingopyxis alaskensis (strain DSM 13593 / LMG 18877 / RB2256) (Sphingomonas alaskensis).